The sequence spans 228 residues: Glucose-induced degradation protein 8-A homolog (228 aa).

Residues 25 to 57 enclose the LisH domain; sequence QRADMNRLIMNYLVTEGFKEAAEKFRMESGIEP. The CTLH domain occupies 63-120; it reads SLDERIKIREMVLKGQIQEAIALINSLHPELLDTNRYLYFHLQQQHLIELIRLRETEA.

Belongs to the GID8 family. In terms of assembly, identified in the CTLH complex that contains at least MAEA, RMND5A (or alternatively its paralog RMND5B), GID8, WDR26, and RANBP9 and/or RANBP10. Interacts with CTNNB1.

Functionally, core component of the CTLH E3 ubiquitin-protein ligase complex that selectively accepts ubiquitin from UBE2H and mediates ubiquitination and subsequent proteasomal degradation of target proteins. Acts as a positive regulator of Wnt signaling pathway by promoting beta-catenin (CTNNB1) nuclear accumulation. Required for normal Wnt signaling and normal dorsoventral patterning during embryogenesis. In Danio rerio (Zebrafish), this protein is Glucose-induced degradation protein 8-A homolog (gid8a).